We begin with the raw amino-acid sequence, 417 residues long: Serine hydroxymethyltransferase (417 aa).

(6S)-5,6,7,8-tetrahydrofolate contacts are provided by residues leucine 122 and 126–128 (GHL). Position 230 is an N6-(pyridoxal phosphate)lysine (lysine 230). 355–357 (SPF) contacts (6S)-5,6,7,8-tetrahydrofolate.

This sequence belongs to the SHMT family. As to quaternary structure, homodimer. Requires pyridoxal 5'-phosphate as cofactor.

It localises to the cytoplasm. The enzyme catalyses (6R)-5,10-methylene-5,6,7,8-tetrahydrofolate + glycine + H2O = (6S)-5,6,7,8-tetrahydrofolate + L-serine. Its pathway is one-carbon metabolism; tetrahydrofolate interconversion. It participates in amino-acid biosynthesis; glycine biosynthesis; glycine from L-serine: step 1/1. In terms of biological role, catalyzes the reversible interconversion of serine and glycine with tetrahydrofolate (THF) serving as the one-carbon carrier. This reaction serves as the major source of one-carbon groups required for the biosynthesis of purines, thymidylate, methionine, and other important biomolecules. Also exhibits THF-independent aldolase activity toward beta-hydroxyamino acids, producing glycine and aldehydes, via a retro-aldol mechanism. The polypeptide is Serine hydroxymethyltransferase (Francisella philomiragia subsp. philomiragia (strain ATCC 25017 / CCUG 19701 / FSC 153 / O#319-036)).